The primary structure comprises 212 residues: MSDYRAEFVEFAVASQVLCFGEFKTKAGRLSPYFFNAGLFNDGEKLKRLGEFYAKAIVDSGIAFDVMFGPAYKGIPLAASIVIALAGMGRNVPFAFNRKEAKDHGEGGTVVGAPLQGRVLIVDDVISAGTSVRESVDLIRASDATPAGVVIALDRMERGQGDKSAVQEVREQYDIPVVAVVTLDNLVEFLERDANRRTELQAVANYRENYGV.

5-phospho-alpha-D-ribose 1-diphosphate is bound at residue K26. 34–35 (FF) is an orotate binding site. 5-phospho-alpha-D-ribose 1-diphosphate is bound by residues 72–73 (YK), R98, K99, K102, H104, and 123–131 (DDVISAGTS). Orotate-binding residues include S127 and R155.

It belongs to the purine/pyrimidine phosphoribosyltransferase family. PyrE subfamily. As to quaternary structure, homodimer. It depends on Mg(2+) as a cofactor.

The catalysed reaction is orotidine 5'-phosphate + diphosphate = orotate + 5-phospho-alpha-D-ribose 1-diphosphate. Its pathway is pyrimidine metabolism; UMP biosynthesis via de novo pathway; UMP from orotate: step 1/2. Its function is as follows. Catalyzes the transfer of a ribosyl phosphate group from 5-phosphoribose 1-diphosphate to orotate, leading to the formation of orotidine monophosphate (OMP). The chain is Orotate phosphoribosyltransferase from Thiobacillus denitrificans (strain ATCC 25259 / T1).